The following is a 224-amino-acid chain: ATP phosphoribosyltransferase (224 aa).

This sequence belongs to the ATP phosphoribosyltransferase family. Short subfamily. As to quaternary structure, heteromultimer composed of HisG and HisZ subunits.

It localises to the cytoplasm. It catalyses the reaction 1-(5-phospho-beta-D-ribosyl)-ATP + diphosphate = 5-phospho-alpha-D-ribose 1-diphosphate + ATP. It functions in the pathway amino-acid biosynthesis; L-histidine biosynthesis; L-histidine from 5-phospho-alpha-D-ribose 1-diphosphate: step 1/9. In terms of biological role, catalyzes the condensation of ATP and 5-phosphoribose 1-diphosphate to form N'-(5'-phosphoribosyl)-ATP (PR-ATP). Has a crucial role in the pathway because the rate of histidine biosynthesis seems to be controlled primarily by regulation of HisG enzymatic activity. This is ATP phosphoribosyltransferase from Cupriavidus metallidurans (strain ATCC 43123 / DSM 2839 / NBRC 102507 / CH34) (Ralstonia metallidurans).